Consider the following 486-residue polypeptide: Putative ankyrin repeat protein R634 (486 aa).

ANK repeat units follow at residues 84-113, 114-143, 145-173, 174-203, 205-233, 234-263, 265-293, 307-336, 337-366, 367-396, 398-426, and 427-456; these read DLFK…NVRE, HNDV…DLYA, KNTL…NFRE, NCDT…DVNS, SHKS…NIDW, RHNY…NLEI, DGCI…EIGF, NKIT…ATIK, EKNY…SLEK, KINK…NVKT, EGLP…DVTS, and YDNY…NVND.

The sequence is that of Putative ankyrin repeat protein R634 from Acanthamoeba polyphaga (Amoeba).